The primary structure comprises 405 residues: uncharacterized protein (405 aa).

Helical transmembrane passes span 19–39 (ILSI…PLAV), 47–67 (VMGF…FATL), 85–105 (IVVF…TAGL), 129–149 (SFAG…LHIG), 157–177 (IVTY…YHWG), 178–198 (GLQA…LLAI), 224–244 (GMAL…ITLF), 252–272 (GAAF…LLFP), 283–303 (VAMI…VATM), 309–329 (IGVL…GVVA), 344–364 (TYTV…GLVM), and 366–386 (WAGV…ALLL).

The protein belongs to the major facilitator superfamily. YhhS family.

It is found in the cell inner membrane. This is an uncharacterized protein from Escherichia coli O157:H7.